The chain runs to 347 residues: Holliday junction branch migration complex subunit RuvB (347 aa).

The interval 1–185 (MSDDPTTPEL…FGFTAHLEFY (185 aa)) is large ATPase domain (RuvB-L). Residues leucine 24, arginine 25, glycine 66, lysine 69, threonine 70, threonine 71, 132–134 (EDF), arginine 175, tyrosine 185, and arginine 222 each bind ATP. Threonine 70 is a binding site for Mg(2+). The segment at 186 to 255 (DEGELAQVLA…AVHAALELYD (70 aa)) is small ATPAse domain (RuvB-S). Residues 258–347 (ELGLDRLDRA…SQPPSLMDDL (90 aa)) are head domain (RuvB-H). Positions 313 and 318 each coordinate DNA.

The protein belongs to the RuvB family. As to quaternary structure, homohexamer. Forms an RuvA(8)-RuvB(12)-Holliday junction (HJ) complex. HJ DNA is sandwiched between 2 RuvA tetramers; dsDNA enters through RuvA and exits via RuvB. An RuvB hexamer assembles on each DNA strand where it exits the tetramer. Each RuvB hexamer is contacted by two RuvA subunits (via domain III) on 2 adjacent RuvB subunits; this complex drives branch migration. In the full resolvosome a probable DNA-RuvA(4)-RuvB(12)-RuvC(2) complex forms which resolves the HJ.

The protein resides in the cytoplasm. It carries out the reaction ATP + H2O = ADP + phosphate + H(+). The RuvA-RuvB-RuvC complex processes Holliday junction (HJ) DNA during genetic recombination and DNA repair, while the RuvA-RuvB complex plays an important role in the rescue of blocked DNA replication forks via replication fork reversal (RFR). RuvA specifically binds to HJ cruciform DNA, conferring on it an open structure. The RuvB hexamer acts as an ATP-dependent pump, pulling dsDNA into and through the RuvAB complex. RuvB forms 2 homohexamers on either side of HJ DNA bound by 1 or 2 RuvA tetramers; 4 subunits per hexamer contact DNA at a time. Coordinated motions by a converter formed by DNA-disengaged RuvB subunits stimulates ATP hydrolysis and nucleotide exchange. Immobilization of the converter enables RuvB to convert the ATP-contained energy into a lever motion, pulling 2 nucleotides of DNA out of the RuvA tetramer per ATP hydrolyzed, thus driving DNA branch migration. The RuvB motors rotate together with the DNA substrate, which together with the progressing nucleotide cycle form the mechanistic basis for DNA recombination by continuous HJ branch migration. Branch migration allows RuvC to scan DNA until it finds its consensus sequence, where it cleaves and resolves cruciform DNA. This is Holliday junction branch migration complex subunit RuvB from Leifsonia xyli subsp. xyli (strain CTCB07).